Here is a 77-residue protein sequence, read N- to C-terminus: Putative defensin-like protein 158 (77 aa).

An N-terminal signal peptide occupies residues 1 to 24 (MANISWSHFLILMLVFSVVKKGKG). 4 cysteine pairs are disulfide-bonded: Cys-31–Cys-77, Cys-41–Cys-60, Cys-46–Cys-71, and Cys-50–Cys-73.

It belongs to the DEFL family.

It is found in the secreted. The polypeptide is Putative defensin-like protein 158 (LCR23) (Arabidopsis thaliana (Mouse-ear cress)).